We begin with the raw amino-acid sequence, 205 residues long: COMM domain-containing protein 8 (205 aa).

A COMM domain is found at 139–205 (SLSDFDWKMN…TFDQINEVSF (67 aa)).

Belongs to the COMM domain-containing protein 8 family. Component of the commander complex consisting of the CCC subcomplex and the retriever subcomplex. Component of the CCC subcomplex.

Functionally, scaffold protein in the commander complex that is essential for endosomal recycling of transmembrane cargos; the commander complex is composed of the CCC subcomplex and the retriever subcomplex. This Dictyostelium discoideum (Social amoeba) protein is COMM domain-containing protein 8 (commd8).